Reading from the N-terminus, the 374-residue chain is tRNA-specific 2-thiouridylase MnmA (374 aa).

ATP-binding positions include 13–20 and methionine 39; that span reads GMSGGVDS. The interaction with target base in tRNA stretch occupies residues 99 to 101; it reads NPD. Cysteine 104 (nucleophile) is an active-site residue. Cysteines 104 and 201 form a disulfide. Glycine 128 contributes to the ATP binding site. Residues 151 to 153 are interaction with tRNA; that stretch reads KDQ. Residue cysteine 201 is the Cysteine persulfide intermediate of the active site. The interaction with tRNA stretch occupies residues 313–314; it reads RY.

Belongs to the MnmA/TRMU family.

It localises to the cytoplasm. It carries out the reaction S-sulfanyl-L-cysteinyl-[protein] + uridine(34) in tRNA + AH2 + ATP = 2-thiouridine(34) in tRNA + L-cysteinyl-[protein] + A + AMP + diphosphate + H(+). Its function is as follows. Catalyzes the 2-thiolation of uridine at the wobble position (U34) of tRNA, leading to the formation of s(2)U34. The sequence is that of tRNA-specific 2-thiouridylase MnmA from Streptococcus equi subsp. zooepidemicus (strain H70).